The primary structure comprises 1454 residues: Receptor-type tyrosine-protein phosphatase T (1454 aa).

An N-terminal signal peptide occupies residues 1–29 (MGSLGGLALCLLRLLLLGLQRPPLPGAGA). The Extracellular segment spans residues 30-770 (QSAAGGCSFD…EKQVDNTVKM (741 aa)). The region spanning 34–195 (GGCSFDEHYS…VRVLAHPCRK (162 aa)) is the MAM domain. N-linked (GlcNAc...) asparagine glycosylation is found at N82, N102, N141, and N212. The region spanning 197-288 (PHFLRLQNVE…SGVSNYAELI (92 aa)) is the Ig-like C2-type domain. C217 and C271 are disulfide-bonded. Fibronectin type-III domains lie at 295–388 (PIAP…TKCA), 393–487 (GPQN…TEED), and 488–594 (VPGA…SAPS). Residues N425, N514, N551, N605, N658, and N688 are each glycosylated (N-linked (GlcNAc...) asparagine). The 98-residue stretch at 670-767 (AELKPSNLPV…VEPEKQVDNT (98 aa)) folds into the Fibronectin type-III 4 domain. Residues 771–791 (AGVIAGLLMFIIILLGVMLTI) form a helical membrane-spanning segment. Residues 792–1454 (KRRKLAKKQK…EVALEYLSSF (663 aa)) lie on the Cytoplasmic side of the membrane. Positions 800–852 (QKETQSGAQREMGPVASTDKPTAKLGTNRNDEGFSSSSQDVNGFTDGSRGELS) are disordered. Over residues 824-841 (LGTNRNDEGFSSSSQDVN) the composition is skewed to polar residues. Tyrosine-protein phosphatase domains lie at 902–1156 (FKEE…ILEA) and 1188–1450 (IKDE…ALEY). Substrate is bound by residues D1065, 1097-1103 (CSAGAGR), and Q1141. Residue C1097 is the Phosphocysteine intermediate of the active site. S1221 bears the Phosphoserine mark. C1391 functions as the Phosphocysteine intermediate in the catalytic mechanism.

Belongs to the protein-tyrosine phosphatase family. Receptor class 2B subfamily. Expression is restricted to the CNS. Distributed throughout the brain and spinal cord.

It localises to the membrane. The catalysed reaction is O-phospho-L-tyrosyl-[protein] + H2O = L-tyrosyl-[protein] + phosphate. May be involved in both signal transduction and cellular adhesion in the CNS. May have specific signaling roles in the tyrosine phosphorylation/dephosphorylation pathway in the anterior compartment of the adult cerebellar cortex. This chain is Receptor-type tyrosine-protein phosphatase T (Ptprt), found in Mus musculus (Mouse).